Here is a 295-residue protein sequence, read N- to C-terminus: 5,10-methylenetetrahydrofolate reductase (295 aa).

Residue glutamate 28 is the Proton donor/acceptor of the active site. Threonine 59 provides a ligand contact to NADH. Positions 89, 119, 120, 121, 133, 153, 157, 160, 166, 169, 172, and 173 each coordinate FAD. Position 121 (aspartate 121) interacts with (6S)-5-methyl-5,6,7,8-tetrahydrofolate. Glutamine 184 is a binding site for NADH. Residues glutamine 184, glutamine 220, and lysine 280 each coordinate (6S)-5-methyl-5,6,7,8-tetrahydrofolate.

The protein belongs to the methylenetetrahydrofolate reductase family. FAD is required as a cofactor.

It catalyses the reaction (6S)-5-methyl-5,6,7,8-tetrahydrofolate + NAD(+) = (6R)-5,10-methylene-5,6,7,8-tetrahydrofolate + NADH + H(+). Its pathway is one-carbon metabolism; tetrahydrofolate interconversion. The protein operates within amino-acid biosynthesis; L-methionine biosynthesis via de novo pathway. Its function is as follows. Catalyzes the NADH-dependent reduction of 5,10-methylenetetrahydrofolate to 5-methyltetrahydrofolate. Is required to provide the methyl group necessary for methionine synthetase to convert homocysteine to methionine; the methyl group is given by 5-methyltetrahydrofolate. This chain is 5,10-methylenetetrahydrofolate reductase (metF), found in Buchnera aphidicola subsp. Baizongia pistaciae (strain Bp).